The primary structure comprises 383 residues: Chitinase-3-like protein 1 (383 aa).

The first 21 residues, 1-21 (MGLRVAQTGFVVLVLLQSCAA), serve as a signal peptide directing secretion. The GH18 domain occupies 22 to 383 (YKLICYYTSW…NAIKDVLAGV (362 aa)). Cys-26 and Cys-51 are joined by a disulfide. An N-linked (GlcNAc...) asparagine glycan is attached at Asn-60. Residues 70 to 71 (EW), 97 to 100 (GGWN), Tyr-141, 204 to 207 (LTYD), and Lys-263 each bind chitin. Residues Cys-300 and Cys-364 are joined by a disulfide bond. Positions 324-338 (QWVAYDDQESVKNKA) are important for AKT1 activation and IL8 production. Trp-352 serves as a coordination point for chitin.

This sequence belongs to the glycosyl hydrolase 18 family. As to quaternary structure, monomer. In terms of tissue distribution, detected in mammary gland.

The protein localises to the secreted. It is found in the extracellular space. The protein resides in the cytoplasm. Its subcellular location is the perinuclear region. It localises to the endoplasmic reticulum. In terms of biological role, carbohydrate-binding lectin with a preference for chitin. Has no chitinase activity. May play a role in tissue remodeling and in the capacity of cells to respond to and cope with changes in their environment. Plays a role in T-helper cell type 2 (Th2) inflammatory response and IL-13-induced inflammation, regulating allergen sensitization, inflammatory cell apoptosis, dendritic cell accumulation and M2 macrophage differentiation. Facilitates invasion of pathogenic enteric bacteria into colonic mucosa and lymphoid organs. Mediates activation of AKT1 signaling pathway and subsequent IL8 production in colonic epithelial cells. Regulates antibacterial responses in lung by contributing to macrophage bacterial killing, controlling bacterial dissemination and augmenting host tolerance. Also regulates hyperoxia-induced injury, inflammation and epithelial apoptosis in lung. This Bubalus bubalis (Domestic water buffalo) protein is Chitinase-3-like protein 1 (CHI3L1).